The sequence spans 329 residues: Glycerol-3-phosphate dehydrogenase [NAD(P)+] (329 aa).

3 residues coordinate NADPH: Trp11, Arg30, and Lys103. Lys103, Gly132, and Ser134 together coordinate sn-glycerol 3-phosphate. Ala136 provides a ligand contact to NADPH. Residues Lys187, Asp240, Ser250, Arg251, and Asn252 each contribute to the sn-glycerol 3-phosphate site. Lys187 serves as the catalytic Proton acceptor. Position 251 (Arg251) interacts with NADPH. NADPH-binding residues include Val275 and Glu277.

This sequence belongs to the NAD-dependent glycerol-3-phosphate dehydrogenase family.

The protein localises to the cytoplasm. The catalysed reaction is sn-glycerol 3-phosphate + NAD(+) = dihydroxyacetone phosphate + NADH + H(+). It catalyses the reaction sn-glycerol 3-phosphate + NADP(+) = dihydroxyacetone phosphate + NADPH + H(+). Its pathway is membrane lipid metabolism; glycerophospholipid metabolism. Functionally, catalyzes the reduction of the glycolytic intermediate dihydroxyacetone phosphate (DHAP) to sn-glycerol 3-phosphate (G3P), the key precursor for phospholipid synthesis. This chain is Glycerol-3-phosphate dehydrogenase [NAD(P)+], found in Dechloromonas aromatica (strain RCB).